The sequence spans 428 residues: 3-phosphoshikimate 1-carboxyvinyltransferase (428 aa).

Lys-22, Ser-23, and Arg-27 together coordinate 3-phosphoshikimate. Lys-22 provides a ligand contact to phosphoenolpyruvate. Residues Gly-94 and Arg-122 each contribute to the phosphoenolpyruvate site. 4 residues coordinate 3-phosphoshikimate: Ser-167, Gln-169, Asp-314, and Lys-341. Phosphoenolpyruvate is bound at residue Gln-169. Asp-314 (proton acceptor) is an active-site residue. The phosphoenolpyruvate site is built by Arg-345 and Arg-387.

The protein belongs to the EPSP synthase family. In terms of assembly, monomer.

Its subcellular location is the cytoplasm. The catalysed reaction is 3-phosphoshikimate + phosphoenolpyruvate = 5-O-(1-carboxyvinyl)-3-phosphoshikimate + phosphate. It functions in the pathway metabolic intermediate biosynthesis; chorismate biosynthesis; chorismate from D-erythrose 4-phosphate and phosphoenolpyruvate: step 6/7. Its function is as follows. Catalyzes the transfer of the enolpyruvyl moiety of phosphoenolpyruvate (PEP) to the 5-hydroxyl of shikimate-3-phosphate (S3P) to produce enolpyruvyl shikimate-3-phosphate and inorganic phosphate. The sequence is that of 3-phosphoshikimate 1-carboxyvinyltransferase from Geotalea uraniireducens (strain Rf4) (Geobacter uraniireducens).